The primary structure comprises 153 residues: uncharacterized protein (153 aa).

A disordered region spans residues 19–46; that stretch reads EKSTRLEEDAMESEPLAGTKTRGRGRRR.

This is an uncharacterized protein from Homo sapiens (Human).